Here is a 625-residue protein sequence, read N- to C-terminus: MKAQADSRFDYVKINLASPERIRQWGERSLPNGVVVGEVTKPETINYRTLKPEMDGLFCERIFGPSKDWECWCGKYKRVRHRGIVCERCGVEVTESRVRRHRMGFIKLAAPVTHVWYLKGIPSYLSILLDMALRDVEQIVYFNSYVVLDPGNASNLSYKQLLTEDQWIEIEEQIYAEDSELYGIEVGIGAEAIQRLLQEINLEEVAEKLREEILESKGQKRAKLIKRLRVIDNFVATNSRPDWMVLSVIPVIPPDLRPMVQLDGGRFATSDLNDLYRRVINRNNRLSRLQEILAPEIIVRNEKRMLQEAVDALIDNGRRGRTVVGANNRALKSLSDIIEGKQGRFRQNLLGKRVDYSGRSVIVVGPKLKIYQCGLPREMAIELFQPFVIHRLIRLGLVNNIKAAKKLIMREDPSVWTVLEEVITGHPVLLNRAPTLHRLGIQAFEPILVEGRAIQLHPLVCPAFNADFDGDQMAVHVPLSLEAQSEARLLMLACHNILSPATGKPIVAPSQDMVLGCYYLTAENPKAQKGANRYFGSIPDAIKAYEQGTVDLHAYVWLRYNGDVVTHKPDTEVLKTETLDDGSVIKHYRERRVREKDGEVISQFIRTTPGRIIYNKTIEDALVAL.

Zn(2+)-binding residues include C71, C73, C86, and C89. Positions 467, 469, and 471 each coordinate Mg(2+).

The protein belongs to the RNA polymerase beta' chain family. RpoC1 subfamily. As to quaternary structure, in cyanobacteria the RNAP catalytic core is composed of 2 alpha, 1 beta, 1 beta', 1 gamma and 1 omega subunit. When a sigma factor is associated with the core the holoenzyme is formed, which can initiate transcription. It depends on Mg(2+) as a cofactor. The cofactor is Zn(2+).

The enzyme catalyses RNA(n) + a ribonucleoside 5'-triphosphate = RNA(n+1) + diphosphate. In terms of biological role, DNA-dependent RNA polymerase catalyzes the transcription of DNA into RNA using the four ribonucleoside triphosphates as substrates. This is DNA-directed RNA polymerase subunit gamma from Rippkaea orientalis (strain PCC 8801 / RF-1) (Cyanothece sp. (strain PCC 8801)).